The sequence spans 306 residues: Agmatinase (306 aa).

Mn(2+)-binding residues include histidine 126, aspartate 149, histidine 151, aspartate 153, aspartate 230, and aspartate 232.

The protein belongs to the arginase family. Agmatinase subfamily. Requires Mn(2+) as cofactor.

It carries out the reaction agmatine + H2O = urea + putrescine. It functions in the pathway amine and polyamine biosynthesis; putrescine biosynthesis via agmatine pathway; putrescine from agmatine: step 1/1. Its function is as follows. Catalyzes the formation of putrescine from agmatine. In Escherichia coli O9:H4 (strain HS), this protein is Agmatinase.